We begin with the raw amino-acid sequence, 263 residues long: Proteasome subunit alpha type-1 (263 aa).

Methionine 1 is modified (N-acetylmethionine). Phosphoserine; alternate is present on serine 110. Serine 110 carries O-linked (GlcNAc) serine; alternate glycosylation. Lysine 115 participates in a covalent cross-link: Glycyl lysine isopeptide (Lys-Gly) (interchain with G-Cter in ubiquitin). Serine 177 carries the post-translational modification Phosphoserine. Lysine 208 participates in a covalent cross-link: Glycyl lysine isopeptide (Lys-Gly) (interchain with G-Cter in ubiquitin). Positions 232-263 (FLDGLEERPQRKAQPSQAADEPAEKADEPMEH) are disordered. The segment covering 253–263 (PAEKADEPMEH) has biased composition (basic and acidic residues).

The protein belongs to the peptidase T1A family. In terms of assembly, the 26S proteasome consists of a 20S proteasome core and two 19S regulatory subunits. The 20S proteasome core is a barrel-shaped complex made of 28 subunits that are arranged in four stacked rings. The two outer rings are each formed by seven alpha subunits, and the two inner rings are formed by seven beta subunits. The proteolytic activity is exerted by three beta-subunits PSMB5, PSMB6 and PSMB7. Interacts with NOTCH3. Interacts with ZFAND1. In terms of processing, proteolytically cleaved from a C-terminal extension in the course of the conversion of the proteasome from its latent form into its active form. As to expression, ubiquitous.

The protein resides in the cytoplasm. The protein localises to the nucleus. Component of the 20S core proteasome complex involved in the proteolytic degradation of most intracellular proteins. This complex plays numerous essential roles within the cell by associating with different regulatory particles. Associated with two 19S regulatory particles, forms the 26S proteasome and thus participates in the ATP-dependent degradation of ubiquitinated proteins. The 26S proteasome plays a key role in the maintenance of protein homeostasis by removing misfolded or damaged proteins that could impair cellular functions, and by removing proteins whose functions are no longer required. Associated with the PA200 or PA28, the 20S proteasome mediates ubiquitin-independent protein degradation. This type of proteolysis is required in several pathways including spermatogenesis (20S-PA200 complex) or generation of a subset of MHC class I-presented antigenic peptides (20S-PA28 complex). This chain is Proteasome subunit alpha type-1 (Psma1), found in Rattus norvegicus (Rat).